The following is a 328-amino-acid chain: Nitrilase (328 aa).

The CN hydrolase domain occupies 9-286; the sequence is VRVAAIQAEP…EGILYANVDV (278 aa). The active-site Proton acceptor is the glutamate 49. Lysine 131 is a catalytic residue. The active-site Nucleophile is the cysteine 166.

Belongs to the carbon-nitrogen hydrolase superfamily. Nitrilase family.

It carries out the reaction a nitrile + 2 H2O = a carboxylate + NH4(+). In terms of biological role, nitrilase that hydrolyzes preferentially 4-cyanopyridine. Is also able to hydrolyze some aliphatic nitriles, such as (R,S)-mandelonitrile. In Penicillium rubens (strain ATCC 28089 / DSM 1075 / NRRL 1951 / Wisconsin 54-1255) (Penicillium chrysogenum), this protein is Nitrilase.